Reading from the N-terminus, the 391-residue chain is Putative B3 domain-containing protein Os08g0325100 (391 aa).

A DNA-binding region (TF-B3) is located at residues 32–125; sequence GDFQHEIRGE…QFDVIIFDQV (94 aa). The tract at residues 143–232 is disordered; the sequence is VQEGRTDATE…SSRAHPQPMP (90 aa). The span at 172–226 shows a compositional bias: polar residues; that stretch reads EGRTNATETLNSSRAHSQPMPMQTPATETLNSSRAHSQDMPMQSPATETLNSSRA.

Its subcellular location is the nucleus. This is Putative B3 domain-containing protein Os08g0325100 from Oryza sativa subsp. japonica (Rice).